The sequence spans 169 residues: NAD(P)H-quinone oxidoreductase subunit J, chloroplastic (169 aa).

Belongs to the complex I 30 kDa subunit family. As to quaternary structure, NDH is composed of at least 16 different subunits, 5 of which are encoded in the nucleus.

It localises to the plastid. It is found in the chloroplast thylakoid membrane. It carries out the reaction a plastoquinone + NADH + (n+1) H(+)(in) = a plastoquinol + NAD(+) + n H(+)(out). It catalyses the reaction a plastoquinone + NADPH + (n+1) H(+)(in) = a plastoquinol + NADP(+) + n H(+)(out). In terms of biological role, NDH shuttles electrons from NAD(P)H:plastoquinone, via FMN and iron-sulfur (Fe-S) centers, to quinones in the photosynthetic chain and possibly in a chloroplast respiratory chain. The immediate electron acceptor for the enzyme in this species is believed to be plastoquinone. Couples the redox reaction to proton translocation, and thus conserves the redox energy in a proton gradient. The sequence is that of NAD(P)H-quinone oxidoreductase subunit J, chloroplastic from Anthoceros angustus (Hornwort).